Consider the following 150-residue polypeptide: Ribonuclease K6 (150 aa).

The N-terminal stretch at 1–23 (MVLCFPLLLLLLVLWGPVCLLHA) is a signal peptide. The Proton acceptor role is filled by His-38. 4 disulfides stabilise this stretch: Cys-46-Cys-104, Cys-60-Cys-114, Cys-78-Cys-129, and Cys-85-Cys-92. Residue Asn-55 is glycosylated (N-linked (GlcNAc...) asparagine). Substrate contacts are provided by residues 61–65 (KHQNT) and Lys-86. Asn-100 carries N-linked (GlcNAc...) asparagine glycosylation. Position 105 (Arg-105) interacts with substrate. The Proton donor role is filled by His-145.

It belongs to the pancreatic ribonuclease family. In terms of assembly, interacts (via N-terminus) with bacterial lipopolysaccharide (LPS).

The protein resides in the secreted. It localises to the lysosome. Its subcellular location is the cytoplasmic granule. Functionally, ribonuclease which shows a preference for the pyrimidines uridine and cytosine. Has potent antibacterial activity against a range of Gram-positive and Gram-negative bacteria, including P.aeruginosa, A.baumanii, M.luteus, S.aureus, E.faecalis, E.faecium, S.saprophyticus and E.coli. Causes loss of bacterial membrane integrity, and also promotes agglutination of Gram-negative bacteria. Probably contributes to urinary tract sterility. Bactericidal activity is independent of RNase activity. This Miopithecus talapoin (Angolan talapoin) protein is Ribonuclease K6 (RNASE6).